A 160-amino-acid polypeptide reads, in one-letter code: Eukaryotic translation initiation factor 5A (160 aa).

Over residues 1 to 12 the composition is skewed to basic and acidic residues; it reads MSDEEHHFESKA. A disordered region spans residues 1–21; the sequence is MSDEEHHFESKADAGASKTFP. Lysine 52 is modified (hypusine).

It belongs to the eIF-5A family. Lys-53 undergoes hypusination, a unique post-translational modification that consists in the addition of a butylamino group from spermidine to lysine side chain, leading to the formation of the unusual amino acid hypusine. eIF-5As are the only known proteins to undergo this modification, which is essential for their function.

Its function is as follows. Translation factor that promotes translation elongation and termination, particularly upon ribosome stalling at specific amino acid sequence contexts. Binds between the exit (E) and peptidyl (P) site of the ribosome and promotes rescue of stalled ribosome: specifically required for efficient translation of polyproline-containing peptides as well as other motifs that stall the ribosome. Acts as a ribosome quality control (RQC) cofactor by joining the RQC complex to facilitate peptidyl transfer during CAT tailing step. This chain is Eukaryotic translation initiation factor 5A, found in Manihot esculenta (Cassava).